Consider the following 825-residue polypeptide: Trimethylamine-N-oxide reductase (825 aa).

Residues 1 to 40 (MKKNNVNEQRRDFLKKTSLGVAGSALSGGMVGVVSKSAVA) constitute a signal peptide (tat-type signal). Ser187 provides a ligand contact to Mo-bis(molybdopterin guanine dinucleotide).

The protein belongs to the prokaryotic molybdopterin-containing oxidoreductase family. The cofactor is Mo-bis(molybdopterin guanine dinucleotide). Post-translationally, predicted to be exported by the Tat system. The position of the signal peptide cleavage has not been experimentally proven.

Its subcellular location is the periplasm. It catalyses the reaction trimethylamine + 2 Fe(III)-[cytochrome c] + H2O = trimethylamine N-oxide + 2 Fe(II)-[cytochrome c] + 3 H(+). Functionally, reduces trimethylamine-N-oxide (TMAO) into trimethylamine; an anaerobic reaction coupled to energy-yielding reactions. The polypeptide is Trimethylamine-N-oxide reductase (torZ) (Haemophilus influenzae (strain ATCC 51907 / DSM 11121 / KW20 / Rd)).